The chain runs to 85 residues: UPF0298 protein SUB0431 (85 aa).

The protein belongs to the UPF0298 family.

It localises to the cytoplasm. This Streptococcus uberis (strain ATCC BAA-854 / 0140J) protein is UPF0298 protein SUB0431.